Consider the following 77-residue polypeptide: Major pilus subunit operon regulatory protein (77 aa).

This sequence to E.coli AfaF and DaaF.

Its function is as follows. Plays a role in the inhibition of methylation at the GATC1028 site located in the regulatory region upstream of the pabA promoter. May, in conjunction with the Mbf (methylation blocking factor), inhibits deoxyadenosine methylase from methylating the GATC1028 site. In Escherichia coli, this protein is Major pilus subunit operon regulatory protein (papI).